We begin with the raw amino-acid sequence, 477 residues long: Multidrug resistance protein PmpM (477 aa).

12 helical membrane-spanning segments follow: residues 21-41 (LLTLAAPIMIAQLATTAMGFV), 56-76 (AVALGNSIWIPMFLLMTGTLL), 104-124 (LALLIGPLSGAVLWWLSEPIL), 133-153 (LIGPSLLYLKGIALGFPAAAL), 171-191 (MVLGIGGLLLNIPINYALIYG), 202-222 (GCGWATGSVMWFMFLGMLFWV), 253-273 (LPIGIAVFAESSIFSVIALLI), 286-306 (IALNFSALVFMIPYSLGMAVT), 326-346 (GVGMAAALGYACVSASLMLLL), 360-380 (VIAIAASLIVFSALFQFSDAL), 398-418 (MIMTLFAYWGIGLPVGYSLGL), and 431-451 (LWQGLVVGLTGAAIMLCIRLA).

It belongs to the multi antimicrobial extrusion (MATE) (TC 2.A.66.1) family.

The protein resides in the cell inner membrane. Functionally, multidrug efflux pump that functions as an H(+)/drug antiporter. Confers resistance to benzalkonium chloride, fluoroquinolones, ethidium bromide, acriflavine and tetraphenylphosphonium chloride. The chain is Multidrug resistance protein PmpM (pmpM) from Pseudomonas aeruginosa (strain ATCC 15692 / DSM 22644 / CIP 104116 / JCM 14847 / LMG 12228 / 1C / PRS 101 / PAO1).